We begin with the raw amino-acid sequence, 386 residues long: Delta(7)-sterol 5(6)-desaturase (386 aa).

Transmembrane regions (helical) follow at residues Val-119–Tyr-139, Ile-172–Phe-192, and Ala-206–His-226. In terms of domain architecture, Fatty acid hydroxylase spans Phe-214–Asn-337. The short motif at His-226–His-230 is the Histidine box-1 element. Residues His-239–His-243 carry the Histidine box-2 motif. Residues Pro-272–Trp-292 traverse the membrane as a helical segment. The Histidine box-3 signature appears at His-314–His-318.

This sequence belongs to the sterol desaturase family. Requires Fe cation as cofactor.

The protein resides in the endoplasmic reticulum membrane. The enzyme catalyses a Delta(7)-sterol + 2 Fe(II)-[cytochrome b5] + O2 + 2 H(+) = a Delta(5),Delta(7)-sterol + 2 Fe(III)-[cytochrome b5] + 2 H2O. Its pathway is steroid metabolism; ergosterol biosynthesis; ergosterol from zymosterol: step 3/5. Its function is as follows. Catalyzes the introduction of a C-5 double bond in the B ring of ergosterol. May contribute to the regulation of ergosterol biosynthesis. The protein is Delta(7)-sterol 5(6)-desaturase (ERG3) of Candida dubliniensis (strain CD36 / ATCC MYA-646 / CBS 7987 / NCPF 3949 / NRRL Y-17841) (Yeast).